The chain runs to 309 residues: Glutaminase (309 aa).

7 residues coordinate substrate: serine 64, asparagine 114, glutamate 160, asparagine 167, tyrosine 191, tyrosine 243, and valine 261.

Belongs to the glutaminase family. Homotetramer.

The catalysed reaction is L-glutamine + H2O = L-glutamate + NH4(+). This chain is Glutaminase, found in Azorhizobium caulinodans (strain ATCC 43989 / DSM 5975 / JCM 20966 / LMG 6465 / NBRC 14845 / NCIMB 13405 / ORS 571).